The primary structure comprises 466 residues: Cysteine--tRNA ligase (466 aa).

Residue C29 coordinates Zn(2+). The 'HIGH' region signature appears at 31–41 (ATVQAAPHIGH). C208, H233, and E237 together coordinate Zn(2+). Positions 264–268 (KMSKS) match the 'KMSKS' region motif. Position 267 (K267) interacts with ATP.

It belongs to the class-I aminoacyl-tRNA synthetase family. Monomer. Zn(2+) is required as a cofactor.

Its subcellular location is the cytoplasm. The catalysed reaction is tRNA(Cys) + L-cysteine + ATP = L-cysteinyl-tRNA(Cys) + AMP + diphosphate. The chain is Cysteine--tRNA ligase from Streptomyces griseus subsp. griseus (strain JCM 4626 / CBS 651.72 / NBRC 13350 / KCC S-0626 / ISP 5235).